We begin with the raw amino-acid sequence, 352 residues long: MAGCGEIDHSLNMLPTNKKASETCSNTAPSLTVPECAICLQTCVHPVSLPCKHVFCYLCVKGASWLGKRCALCRQEIPEDFLDKPTLLSPEELKAASRGNGEYVWYYEGRNGWWQYDERTSRELEDAFSKGKKNTEMLIAGFLYVADLENMVQYRRNEHGRRRKIKRDIIDIPKKGVAGLRLDCDSNTVNLARESSADGADSGSAHTGASVQLPVPSSTRPLTSVDGQLTSPVTPSPDAGASLEDSFAHLQLSGDSIAERSHRGEGEEDHESPSSGRVPDTSTEETESDASSDIEDAPVVVAQHSLTQQRLLVSSANQTVAERSDRPVAGGGTMSVNVRSRRPDGQCTVTEV.

Residues cysteine 36 to arginine 74 form an RING-type zinc finger. Residues lysine 84 and lysine 94 each participate in a glycyl lysine isopeptide (Lys-Gly) (interchain with G-Cter in ubiquitin) cross-link. A WWE domain is found at glutamate 91–arginine 167. Residues tyrosine 107, arginine 110, and tryptophan 114 each contribute to the a glycoprotein site. A Glycyl lysine isopeptide (Lys-Gly) (interchain with G-Cter in ubiquitin) cross-link involves residue lysine 130. Positions 144, 153, 163, and 175 each coordinate a glycoprotein. Lysine 175 participates in a covalent cross-link: Glycyl lysine isopeptide (Lys-Gly) (interchain with G-Cter in ubiquitin). Disordered stretches follow at residues serine 195–serine 242, glutamate 259–aspartate 293, and asparagine 317–valine 352. Over residues alanine 197–serine 210 the composition is skewed to low complexity. The span at valine 215–valine 233 shows a compositional bias: polar residues. Acidic residues predominate over residues serine 282–aspartate 293. Phosphoserine is present on residues serine 288 and serine 292.

In terms of assembly, can form homooligomers. Interacts with PARsylated AXIN1, AXIN2, BLZF1, CASC3, H1-2, IPO7, LIG3, NCL, PARP1, XRCC1, XRCC5 and XRCC6. Interacts with DDB1, DHX15, IQGAP1, LRPPRC, PARP2, PRKDC, RUVBL2, TNKS1 and TNKS2. Binding often leads to interactor ubiquitination, in the presence of the appropriate E1 and E2 enzymes, and proteasomal degradation. Ubiquitinated; autoubiquitinated. Autoubiquitination is enhanced upon poly(ADP-ribose)-binding.

The protein localises to the cytoplasm. Its subcellular location is the cytosol. It is found in the nucleus. It catalyses the reaction S-ubiquitinyl-[E2 ubiquitin-conjugating enzyme]-L-cysteine + [acceptor protein]-L-lysine = [E2 ubiquitin-conjugating enzyme]-L-cysteine + N(6)-ubiquitinyl-[acceptor protein]-L-lysine.. The protein operates within protein modification; protein ubiquitination. E3 ubiquitin-protein ligase that specifically binds poly-ADP-ribosylated (PARsylated) proteins and mediates their ubiquitination and subsequent degradation. May regulate many important biological processes, such as cell survival and DNA damage response. Acts as an activator of the Wnt signaling pathway by mediating the ubiquitination of PARsylated AXIN1 and AXIN2, 2 key components of the beta-catenin destruction complex. Acts in cooperation with tankyrase proteins (TNKS and TNKS2), which mediate PARsylation of target proteins AXIN1, AXIN2, BLZF1, CASC3, TNKS and TNKS2. Recognizes and binds tankyrase-dependent PARsylated proteins via its WWE domain and mediates their ubiquitination, leading to their degradation. Different ubiquitin linkage types have been observed: TNKS2 undergoes ubiquitination at 'Lys-48' and 'Lys-63', while AXIN1 is only ubiquitinated at 'Lys-48'. May regulate TNKS and TNKS2 subcellular location, preventing aggregation at a centrosomal location. Neuroprotective protein. Protects the brain against N-methyl-D-aspartate (NMDA) receptor-mediated glutamate excitotoxicity and ischemia, by interfering with PAR-induced cell death, called parthanatos. Prevents nuclear translocation of AIFM1 in a PAR-binding dependent manner. Does not affect PARP1 activation. Protects against cell death induced by DNA damaging agents, such as N-methyl-N-nitro-N-nitrosoguanidine (MNNG) and rescues cells from G1 arrest. Promotes cell survival after gamma-irradiation. Facilitates DNA repair. The chain is E3 ubiquitin-protein ligase RNF146 (Rnf146) from Rattus norvegicus (Rat).